Consider the following 427-residue polypeptide: Glutamate-1-semialdehyde 2,1-aminomutase (427 aa).

Lys-265 carries the post-translational modification N6-(pyridoxal phosphate)lysine.

Belongs to the class-III pyridoxal-phosphate-dependent aminotransferase family. HemL subfamily. Homodimer. Pyridoxal 5'-phosphate is required as a cofactor.

The protein localises to the cytoplasm. The catalysed reaction is (S)-4-amino-5-oxopentanoate = 5-aminolevulinate. The protein operates within porphyrin-containing compound metabolism; protoporphyrin-IX biosynthesis; 5-aminolevulinate from L-glutamyl-tRNA(Glu): step 2/2. The chain is Glutamate-1-semialdehyde 2,1-aminomutase from Neisseria meningitidis serogroup A / serotype 4A (strain DSM 15465 / Z2491).